A 503-amino-acid polypeptide reads, in one-letter code: Probable cytosol aminopeptidase (503 aa).

Positions 274 and 279 each coordinate Mn(2+). Residue Lys286 is part of the active site. The Mn(2+) site is built by Asp297, Asp356, and Glu358. Residue Arg360 is part of the active site.

Belongs to the peptidase M17 family. The cofactor is Mn(2+).

It is found in the cytoplasm. It catalyses the reaction Release of an N-terminal amino acid, Xaa-|-Yaa-, in which Xaa is preferably Leu, but may be other amino acids including Pro although not Arg or Lys, and Yaa may be Pro. Amino acid amides and methyl esters are also readily hydrolyzed, but rates on arylamides are exceedingly low.. The enzyme catalyses Release of an N-terminal amino acid, preferentially leucine, but not glutamic or aspartic acids.. In terms of biological role, presumably involved in the processing and regular turnover of intracellular proteins. Catalyzes the removal of unsubstituted N-terminal amino acids from various peptides. The polypeptide is Probable cytosol aminopeptidase (Burkholderia orbicola (strain MC0-3)).